A 310-amino-acid polypeptide reads, in one-letter code: HPr kinase/phosphorylase (310 aa).

Catalysis depends on residues His138 and Lys159. 153-160 is a binding site for ATP; that stretch reads GKSGVGKS. Ser160 is a Mg(2+) binding site. Asp177 functions as the Proton acceptor; for phosphorylation activity. Proton donor; for dephosphorylation activity in the catalytic mechanism. An important for the catalytic mechanism of both phosphorylation and dephosphorylation region spans residues 201–210; sequence LEIRGLGIIN. A Mg(2+)-binding site is contributed by Glu202. Arg243 is a catalytic residue. Positions 264–269 are important for the catalytic mechanism of dephosphorylation; it reads PVRPGR.

This sequence belongs to the HPrK/P family. In terms of assembly, homohexamer. Mg(2+) is required as a cofactor.

The enzyme catalyses [HPr protein]-L-serine + ATP = [HPr protein]-O-phospho-L-serine + ADP + H(+). It carries out the reaction [HPr protein]-O-phospho-L-serine + phosphate + H(+) = [HPr protein]-L-serine + diphosphate. Functionally, catalyzes the ATP- as well as the pyrophosphate-dependent phosphorylation of a specific serine residue in HPr, a phosphocarrier protein of the phosphoenolpyruvate-dependent sugar phosphotransferase system (PTS). HprK/P also catalyzes the pyrophosphate-producing, inorganic phosphate-dependent dephosphorylation (phosphorolysis) of seryl-phosphorylated HPr (P-Ser-HPr). The two antagonistic activities of HprK/P are regulated by several intracellular metabolites, which change their concentration in response to the absence or presence of rapidly metabolisable carbon sources (glucose, fructose, etc.) in the growth medium. Also phosphorylates/dephosphorylates the HPr-like catabolite repression protein crh on a specific serine residue. Therefore, by controlling the phosphorylation state of HPr and crh, HPrK/P is a sensor enzyme that plays a major role in the regulation of carbon metabolism and sugar transport: it mediates carbon catabolite repression (CCR), and regulates PTS-catalyzed carbohydrate uptake and inducer exclusion. The polypeptide is HPr kinase/phosphorylase (Bacillus velezensis (strain DSM 23117 / BGSC 10A6 / LMG 26770 / FZB42) (Bacillus amyloliquefaciens subsp. plantarum)).